We begin with the raw amino-acid sequence, 578 residues long: Arginine--tRNA ligase (578 aa).

The 'HIGH' region signature appears at 127–137 (PNLAKEMHVGH).

The protein belongs to the class-I aminoacyl-tRNA synthetase family. In terms of assembly, monomer.

It is found in the cytoplasm. It catalyses the reaction tRNA(Arg) + L-arginine + ATP = L-arginyl-tRNA(Arg) + AMP + diphosphate. The chain is Arginine--tRNA ligase from Pseudomonas putida (strain ATCC 700007 / DSM 6899 / JCM 31910 / BCRC 17059 / LMG 24140 / F1).